The sequence spans 291 residues: N-acetylmannosamine kinase (291 aa).

Residues 5–12 and 132–139 contribute to the ATP site; these read AIDIGGTK and GVGGGVVC. Zn(2+)-binding residues include H156, C166, C168, and C173.

Belongs to the ROK (NagC/XylR) family. NanK subfamily. As to quaternary structure, homodimer.

The catalysed reaction is an N-acyl-D-mannosamine + ATP = an N-acyl-D-mannosamine 6-phosphate + ADP + H(+). It participates in amino-sugar metabolism; N-acetylneuraminate degradation; D-fructose 6-phosphate from N-acetylneuraminate: step 2/5. In terms of biological role, catalyzes the phosphorylation of N-acetylmannosamine (ManNAc) to ManNAc-6-P. The sequence is that of N-acetylmannosamine kinase from Salmonella dublin (strain CT_02021853).